A 184-amino-acid polypeptide reads, in one-letter code: MTEYKLVVVGDGGVGKSALTIQLIQNHFVEEYDPTIEDSYRKQVVIDGETCLLDILDTAGQEEYSAMRDQYMRTGEGFLLVFAVNEAKSFENVANYREQIRRVKDSDDVPMVLVGNKCDLSSRSVDFRTVSETAKGYGIPNVDTSAKTRMGVDEAFYTLVREIRKHRERHDNNKPQKKKKCQIM.

10–17 contacts GTP; it reads GDGGVGKS. Positions 32 to 40 match the Effector region motif; the sequence is YDPTIEDSY. GTP is bound by residues 57–61 and 116–119; these read DTAGQ and NKCD. C181 is subject to Cysteine methyl ester. A lipid anchor (S-farnesyl cysteine) is attached at C181. Positions 182-184 are cleaved as a propeptide — removed in mature form; it reads QIM.

It belongs to the small GTPase superfamily. Ras family. As to quaternary structure, interacts with soc-2. Interacts (in GTP-bound form) with plc-1 (via Ras-associating domain 1). In terms of tissue distribution, expressed in body wall muscles and in the nervous system including ganglion, nerve ring dorsal and ventral nerve cords, motor neurons and sensory tail neurons.

Its subcellular location is the cell membrane. The enzyme catalyses GTP + H2O = GDP + phosphate + H(+). Functionally, GTP-binding protein with GTPase activity. The level of let-60 controls the switch between vulval and hypodermal cell fates during C.elegans vulval induction. May stimulate the guanine nucleotide exchange factor (GEF) activity of rap-1. May induce nuclear condensation. This chain is Ras protein let-60, found in Caenorhabditis elegans.